A 490-amino-acid polypeptide reads, in one-letter code: Endo-1,6-beta-D-glucanase BGN16.3 (490 aa).

The N-terminal stretch at 1 to 28 (MRYALIASMLGQAAISVAMPSEPAHSPR) is a signal peptide. The active-site Proton donor is the Glu243. The active-site Nucleophile is Glu339.

The protein belongs to the glycosyl hydrolase 30 family.

The protein localises to the secreted. Its subcellular location is the extracellular space. The catalysed reaction is Random hydrolysis of (1-&gt;6)-linkages in (1-&gt;6)-beta-D-glucans.. Functionally, has highest activity on the linear beta-1,6-glucan pustulan. Lower activity against yeast glucan and laminarin (beta-1,3-glucans with beta-1,6-branches). No activity on colloidal chitin, pachyman, starch, cellulose, nigeran, dextran or gentobiose. The polypeptide is Endo-1,6-beta-D-glucanase BGN16.3 (Trichoderma harzianum (Hypocrea lixii)).